Here is a 342-residue protein sequence, read N- to C-terminus: Fructose-1,6-bisphosphatase class 1 (342 aa).

The Mg(2+) site is built by glutamate 97, aspartate 119, leucine 121, and aspartate 122. Substrate contacts are provided by residues aspartate 122–serine 125, asparagine 215, tyrosine 247, and lysine 280. Residue glutamate 286 coordinates Mg(2+).

It belongs to the FBPase class 1 family. Homotetramer. Mg(2+) is required as a cofactor.

The protein localises to the cytoplasm. The enzyme catalyses beta-D-fructose 1,6-bisphosphate + H2O = beta-D-fructose 6-phosphate + phosphate. It participates in carbohydrate biosynthesis; gluconeogenesis. This Leptospira interrogans serogroup Icterohaemorrhagiae serovar copenhageni (strain Fiocruz L1-130) protein is Fructose-1,6-bisphosphatase class 1.